A 512-amino-acid polypeptide reads, in one-letter code: Protein SHC1 (512 aa).

The segment covering 101 to 113 has biased composition (acidic residues); sequence EQDEFENDVEDDA. Disordered stretches follow at residues 101–122 and 144–165; these read EQDE…EKSQ and DGNS…SVAL. Sel1-like repeat units lie at residues 318-353, 354-389, 390-429, and 433-470; these read PDAQ…KRLH, IESV…TKNH, PAAM…SMAS, and CGAP…ALGH.

This sequence belongs to the SKT5 family.

The protein localises to the cytoplasm. It localises to the cytoplasmic granule membrane. Required for the activation of chitin synthase III (CHS3) activity during the sporulation process. The polypeptide is Protein SHC1 (SHC1) (Saccharomyces cerevisiae (strain YJM789) (Baker's yeast)).